A 157-amino-acid chain; its full sequence is Nascent polypeptide-associated complex subunit beta (157 aa).

The tract at residues 1-31 is disordered; the sequence is MPVDPEKLAKLQKSTAKKVGGSRVKAKKGVK. The region spanning 33–98 is the NAC-A/B domain; the sequence is EQDDTKLIET…PQEKNITQLI (66 aa). The interval 125–157 is disordered; sequence NPKDFGAAGEAGATEEANEDIPDLVDQKFDDVE. Residues 130–139 show a composition bias toward low complexity; that stretch reads GAAGEAGATE.

This sequence belongs to the NAC-beta family. Part of the nascent polypeptide-associated complex (NAC), consisting of EGD2 and EGD1. NAC associates with ribosomes via EGD1.

The protein localises to the cytoplasm. It is found in the nucleus. Component of the nascent polypeptide-associated complex (NAC), a dynamic component of the ribosomal exit tunnel, protecting the emerging polypeptides from interaction with other cytoplasmic proteins to ensure appropriate nascent protein targeting. The NAC complex also promotes mitochondrial protein import by enhancing productive ribosome interactions with the outer mitochondrial membrane and blocks the inappropriate interaction of ribosomes translating non-secretory nascent polypeptides with translocation sites in the membrane of the endoplasmic reticulum. EGD1 may act as a transcription factor that exert a negative effect on the expression of several genes that are transcribed by RNA polymerase II. The protein is Nascent polypeptide-associated complex subunit beta (EGD1) of Lodderomyces elongisporus (strain ATCC 11503 / CBS 2605 / JCM 1781 / NBRC 1676 / NRRL YB-4239) (Yeast).